The primary structure comprises 140 residues: Histone H3-like protein (140 aa).

The interval 1 to 36 is disordered; the sequence is MSRTKQTASKALGGKAPRKGISAKSIPSSGCSPAMP. The residue at position 5 (K5) is an N6,N6,N6-trimethyllysine; alternate. N6,N6-dimethyllysine; alternate is present on K5. N6-methyllysine; alternate is present on residues K5 and K10. Residues K10, K15, K19, and K24 each carry the N6-acetyllysine; alternate modification. K15 is modified (N6,N6-dimethyllysine; alternate). N6-methyllysine; alternate occurs at positions 19 and 24. N6-acetyllysine occurs at positions 56 and 64.

This sequence belongs to the histone H3 family. In terms of assembly, the nucleosome is a histone octamer containing two molecules each of H2A, H2B, H3 and H4 assembled in one H3-H4 heterotetramer and two H2A-H2B heterodimers. The octamer wraps approximately 147 bp of DNA. Post-translationally, mono-, di- and trimethylated to form H3K4me1/2/3. H3K4me activates gene expression by regulating transcription elongation and plays a role in telomere length maintenance. H3K4me enrichment correlates with transcription levels, and occurs in a 5' to 3' gradient with H3K4me3 enrichment at the 5'-end of genes, shifting to H3K4me2 and then H3K4me1. In terms of processing, acetylation of histone H3 leads to transcriptional activation.

It localises to the nucleus. It is found in the chromosome. In terms of biological role, core component of nucleosome. Nucleosomes wrap and compact DNA into chromatin, limiting DNA accessibility to the cellular machineries which require DNA as a template. Histones thereby play a central role in transcription regulation, DNA repair, DNA replication and chromosomal stability. DNA accessibility is regulated via a complex set of post-translational modifications of histones, also called histone code, and nucleosome remodeling. This chain is Histone H3-like protein, found in Encephalitozoon cuniculi (strain GB-M1) (Microsporidian parasite).